The following is a 96-amino-acid chain: MRRRKRCHRAEIQRDKKADIYPVWIHLPNQLRQIVHPLFVTRCNAPDFDKHQSLHLNHIEGIYPLASLIMPSRYRHIYITLLYLQNKSPDYDSSET.

This Acyrthosiphon pisum secondary endosymbiont phage 1 (Bacteriophage APSE-1) protein is Putative protein p29 (29).